The chain runs to 161 residues: Nucleotide-binding protein lpl1175 (161 aa).

It belongs to the YajQ family.

Its function is as follows. Nucleotide-binding protein. The sequence is that of Nucleotide-binding protein lpl1175 from Legionella pneumophila (strain Lens).